A 497-amino-acid polypeptide reads, in one-letter code: COP9 signalosome complex subunit 3 (497 aa).

The PCI domain maps to 233 to 408 (QAFDAFERCV…DGSPAYLTFL (176 aa)).

The protein belongs to the CSN3 family. Component of the COP9 signalosome (CSN) complex.

The protein localises to the cytoplasm. It is found in the nucleus. Component of the COP9 signalosome (CSN) complex that acts as an regulator of the ubiquitin (Ubl) conjugation pathway by mediating the deneddylation of the cullin subunit of SCF-type E3 ubiquitin-protein ligase complexes. The CSN complex is involved in the regulation of the circadian clock through its control of the stability of the SCF(FWD1) complex. The chain is COP9 signalosome complex subunit 3 (csn-3) from Neurospora crassa (strain ATCC 24698 / 74-OR23-1A / CBS 708.71 / DSM 1257 / FGSC 987).